We begin with the raw amino-acid sequence, 892 residues long: MTDLTLKALAAERQVSVDRLVQQFADAGIRKSADDSVSAQEKQTLLAHLNREAVSGPDKLTLQRKTRSTLNIPGTGGKSKSVQIEVRKKRTFVKRDPQEAERLAAEEQAQREAEEQARREAEEQAKREAQQKAEREAAEQAKREAAEKAKREAAEKDKVSNQQTDDMTKTAQAEKARRENEAAELKRKAEEEARRKLEEEARRVAEEARRMAEENKWTATPEPVEDTSDYHVTTSQHARQAEDENDREVEGGRGRGRNAKAARPAKKGKHAESKADREEARAAVRGGKGGKRKGSSLQQGFQKPAQAVNRDVVIGETITVGELANKMAVKGSQVIKAMMKLGAMATINQVIDQETAQLVAEEMGHKVILRRENELEEAVMSDRDTGAAAEPRAPVVTIMGHVDHGKTSLLDYIRSTKVASGEAGGITQHIGAYHVETDNGMITFLDTPGHAAFTSMRARGAQATDIVVLVVAADDGVMPQTIEAIQHAKAAGVPVVVAVNKIDKPEADPDRVKNELSQYGILPEEWGGESQFVHVSAKAGTGIDELLDAILLQAEVLELKAVRKGMASGAVIESFLDKGRGPVATVLVREGTLHKGDIVLCGFEYGRVRAMRNELGQEVLEAGPSIPVEILGLSGVPAAGDEVTVVRDEKKAREVALYRQGKFREVKLARQQKSKLENMFVNMTEGEVHEVNIVLKADVQGSVEAISDSLLKLSTDEVKVKIIGSGVGGITETDATLAAASNAILVGFNVRADASARKVIESESLDLRYYSVIYNLIDEVKAAMSGMLSPELKQQIIGLAEVRDVFKSPKFGAIAGCMVTEGTIKRHNPIRVLRDNVVIYEGELESLRRFKDDVNEVRNGMECGIGVKNYNDVRVGDMIEVFEIIEIQRTIA.

Positions 66–305 are disordered; that stretch reads TRSTLNIPGT…SLQQGFQKPA (240 aa). Positions 68 to 82 are enriched in polar residues; the sequence is STLNIPGTGGKSKSV. Basic and acidic residues-rich tracts occupy residues 93–159 and 166–216; these read VKRD…KDKV and DMTK…EENK. Over residues 254 to 269 the composition is skewed to basic residues; it reads GRGRNAKAARPAKKGK. Basic and acidic residues predominate over residues 270-282; the sequence is HAESKADREEARA. Residues 391–560 form the tr-type G domain; the sequence is PRAPVVTIMG…LLQAEVLELK (170 aa). A G1 region spans residues 400-407; it reads GHVDHGKT. 400–407 is a GTP binding site; the sequence is GHVDHGKT. The tract at residues 425 to 429 is G2; it reads GITQH. The segment at 446-449 is G3; that stretch reads DTPG. GTP is bound by residues 446 to 450 and 500 to 503; these read DTPGH and NKID. Residues 500–503 form a G4 region; the sequence is NKID. The tract at residues 536–538 is G5; sequence SAK.

This sequence belongs to the TRAFAC class translation factor GTPase superfamily. Classic translation factor GTPase family. IF-2 subfamily.

The protein localises to the cytoplasm. Functionally, one of the essential components for the initiation of protein synthesis. Protects formylmethionyl-tRNA from spontaneous hydrolysis and promotes its binding to the 30S ribosomal subunits. Also involved in the hydrolysis of GTP during the formation of the 70S ribosomal complex. The chain is Translation initiation factor IF-2 from Salmonella typhi.